The primary structure comprises 343 residues: 4-hydroxythreonine-4-phosphate dehydrogenase (343 aa).

Residues His-141 and Thr-142 each coordinate substrate. A divalent metal cation is bound by residues His-175, His-220, and His-275. The substrate site is built by Lys-283, Asn-292, and Arg-301.

This sequence belongs to the PdxA family. In terms of assembly, homodimer. Requires Zn(2+) as cofactor. Mg(2+) is required as a cofactor. The cofactor is Co(2+).

It is found in the cytoplasm. It catalyses the reaction 4-(phosphooxy)-L-threonine + NAD(+) = 3-amino-2-oxopropyl phosphate + CO2 + NADH. The protein operates within cofactor biosynthesis; pyridoxine 5'-phosphate biosynthesis; pyridoxine 5'-phosphate from D-erythrose 4-phosphate: step 4/5. In terms of biological role, catalyzes the NAD(P)-dependent oxidation of 4-(phosphooxy)-L-threonine (HTP) into 2-amino-3-oxo-4-(phosphooxy)butyric acid which spontaneously decarboxylates to form 3-amino-2-oxopropyl phosphate (AHAP). This is 4-hydroxythreonine-4-phosphate dehydrogenase from Janthinobacterium sp. (strain Marseille) (Minibacterium massiliensis).